The sequence spans 313 residues: Protein TIC 22-like, chloroplastic (313 aa).

The N-terminal 96 residues, 1–96 (MNSNIFPPSK…RISDDGGGAR (96 aa)), are a transit peptide targeting the chloroplast.

It belongs to the Tic22 family.

Its subcellular location is the plastid. It is found in the chloroplast intermembrane space. Functionally, involved in protein precursor import into chloroplasts. The chain is Protein TIC 22-like, chloroplastic (TIC22L) from Arabidopsis thaliana (Mouse-ear cress).